Reading from the N-terminus, the 540-residue chain is MNTSAPLQNVPNATLLNMPPLHGGNSTSLQEGLRDFIHTATLVTCTFLLAIIFCLGSYGNFIVFLSFFDPSFRKFRTNFDFMILNLSFCDLFICGVTAPMFTFVLFFSSASSIPDSFCFTFHLTSSGFVIMSLKMVAVIALHRLRMVMGKQPNCTASFSCILLLTLLLWATSFTLATLATLRTNKSHLCLPMSSLMDGEGKAILSLYVVDFTFCVAVVSVSYIMIAQTLRKNAQVKKCPPVITVDASRPQPFMGASVKGNGDPIQCTMPALYRNQNYNKLQHSQTHGYTKNINQMPIPSASRLQLVSAINFSTAKDSKAVVTCVVIVLSVLVCCLPLGISLVQMVLSDNGSFILYQFELFGFTLIFFKSGLNPFIYSRNSAGLRRKVLWCLRYTGLGFLCCKQKTRLRAMGKGNLEINRNKSSHHETNSAYMLSPKPQRKFVDQACGPSHSKESAASPKVSAGHQPCGQSSSTPINTRIEPYYSIYNSSPSQQESGPANLPPVNSFGFASSYIAMHYYTTNDLMQEYDSTSAKQIPIPSV.

The Extracellular segment spans residues 1-46 (MNTSAPLQNVPNATLLNMPPLHGGNSTSLQEGLRDFIHTATLVTCT). Asn-2 and Asn-25 each carry an N-linked (GlcNAc...) asparagine glycan. The helical transmembrane segment at 47–67 (FLLAIIFCLGSYGNFIVFLSF) threads the bilayer. Residues 68–86 (FDPSFRKFRTNFDFMILNL) are Cytoplasmic-facing. The chain crosses the membrane as a helical span at residues 87–107 (SFCDLFICGVTAPMFTFVLFF). Topologically, residues 108–120 (SSASSIPDSFCFT) are extracellular. The chain crosses the membrane as a helical span at residues 121 to 141 (FHLTSSGFVIMSLKMVAVIAL). Topologically, residues 142–160 (HRLRMVMGKQPNCTASFSC) are cytoplasmic. A helical membrane pass occupies residues 161 to 181 (ILLLTLLLWATSFTLATLATL). The Extracellular portion of the chain corresponds to 182–205 (RTNKSHLCLPMSSLMDGEGKAILS). The N-linked (GlcNAc...) asparagine glycan is linked to Asn-184. Residues 206-226 (LYVVDFTFCVAVVSVSYIMIA) traverse the membrane as a helical segment. Residues 227-318 (QTLRKNAQVK…INFSTAKDSK (92 aa)) lie on the Cytoplasmic side of the membrane. A helical membrane pass occupies residues 319–339 (AVVTCVVIVLSVLVCCLPLGI). The Extracellular portion of the chain corresponds to 340–350 (SLVQMVLSDNG). The helical transmembrane segment at 351-371 (SFILYQFELFGFTLIFFKSGL) threads the bilayer. Over 372-540 (NPFIYSRNSA…SAKQIPIPSV (169 aa)) the chain is Cytoplasmic. The interval 443-475 (DQACGPSHSKESAASPKVSAGHQPCGQSSSTPI) is disordered.

It belongs to the G-protein coupled receptor 1 family. In terms of tissue distribution, highly expressed in brain and heart. Also detected in skeletal muscle, liver and kidney. Also expressed by islet cells (at protein level).

The protein localises to the cell membrane. Functionally, g protein-coupled receptor that is activated by the chemokine CCL5/RANTES. Probably coupled to heterotrimeric Gq proteins, it stimulates inositol trisphosphate production and calcium mobilization upon activation. Together with CCL5/RANTES, may play a role in neuron survival through activation of a downstream signaling pathway involving the PI3, Akt and MAP kinases. CCL5/RANTES may also regulate insulin secretion by pancreatic islet cells through activation of this receptor. The polypeptide is Probable G-protein coupled receptor 75 (Gpr75) (Mus musculus (Mouse)).